The chain runs to 362 residues: Ribosome-binding ATPase YchF (362 aa).

Residues 3-255 (FKCGIIGLPN…MNEDEQKYFM (253 aa)) form the OBG-type G domain. 12 to 17 (NVGKST) contributes to the ATP binding site. The Mg(2+) site is built by S16 and T36. The TGS domain occupies 277 to 360 (NLITFFTAGI…QDGDIINFLF (84 aa)).

The protein belongs to the TRAFAC class OBG-HflX-like GTPase superfamily. OBG GTPase family. YchF/OLA1 subfamily. Requires Mg(2+) as cofactor.

Its function is as follows. ATPase that binds to both the 70S ribosome and the 50S ribosomal subunit in a nucleotide-independent manner. The sequence is that of Ribosome-binding ATPase YchF from Buchnera aphidicola subsp. Schizaphis graminum (strain Sg).